A 507-amino-acid chain; its full sequence is Cobyric acid synthase (507 aa).

The GATase cobBQ-type domain maps to 251–448 (DIDIAVVHLP…LHGLFDSDAF (198 aa)). The active-site Nucleophile is the C332. Residue H440 is part of the active site.

The protein belongs to the CobB/CobQ family. CobQ subfamily.

The protein operates within cofactor biosynthesis; adenosylcobalamin biosynthesis. Functionally, catalyzes amidations at positions B, D, E, and G on adenosylcobyrinic A,C-diamide. NH(2) groups are provided by glutamine, and one molecule of ATP is hydrogenolyzed for each amidation. The protein is Cobyric acid synthase of Klebsiella pneumoniae (strain 342).